Reading from the N-terminus, the 1158-residue chain is ATP-dependent helicase/deoxyribonuclease subunit B (1158 aa).

The region spanning 1-275 (MTLHAYLGRA…QYFNQLYRFN (275 aa)) is the UvrD-like helicase ATP-binding domain. Position 8-15 (8-15 (GRAGTGKS)) interacts with ATP. A UvrD-like helicase C-terminal domain is found at 269 to 583 (NQLYRFNNQD…SIGTMDLAKV (315 aa)). [4Fe-4S] cluster is bound by residues Cys-784, Cys-1112, Cys-1115, and Cys-1121.

This sequence belongs to the helicase family. AddB/RexB type 1 subfamily. Heterodimer of AddA and AddB. Requires Mg(2+) as cofactor. [4Fe-4S] cluster is required as a cofactor.

Functionally, the heterodimer acts as both an ATP-dependent DNA helicase and an ATP-dependent, dual-direction single-stranded exonuclease. Recognizes the chi site generating a DNA molecule suitable for the initiation of homologous recombination. The AddB subunit has 5' -&gt; 3' nuclease activity but not helicase activity. The chain is ATP-dependent helicase/deoxyribonuclease subunit B from Staphylococcus aureus (strain USA300).